A 116-amino-acid chain; its full sequence is Large ribosomal subunit protein uL22 (116 aa).

It belongs to the universal ribosomal protein uL22 family. In terms of assembly, part of the 50S ribosomal subunit.

Its function is as follows. This protein binds specifically to 23S rRNA; its binding is stimulated by other ribosomal proteins, e.g. L4, L17, and L20. It is important during the early stages of 50S assembly. It makes multiple contacts with different domains of the 23S rRNA in the assembled 50S subunit and ribosome. Functionally, the globular domain of the protein is located near the polypeptide exit tunnel on the outside of the subunit, while an extended beta-hairpin is found that lines the wall of the exit tunnel in the center of the 70S ribosome. The polypeptide is Large ribosomal subunit protein uL22 (Sulfurihydrogenibium sp. (strain YO3AOP1)).